Reading from the N-terminus, the 330-residue chain is GMP reductase (330 aa).

The active-site Thioimidate intermediate is cysteine 180. Residue leucine 209 to valine 232 coordinates NADP(+).

The protein belongs to the IMPDH/GMPR family. GuaC type 2 subfamily.

The enzyme catalyses IMP + NH4(+) + NADP(+) = GMP + NADPH + 2 H(+). Catalyzes the irreversible NADPH-dependent deamination of GMP to IMP. It functions in the conversion of nucleobase, nucleoside and nucleotide derivatives of G to A nucleotides, and in maintaining the intracellular balance of A and G nucleotides. The polypeptide is GMP reductase (Lactobacillus acidophilus (strain ATCC 700396 / NCK56 / N2 / NCFM)).